A 75-amino-acid chain; its full sequence is Small ribosomal subunit protein bS18 (75 aa).

This sequence belongs to the bacterial ribosomal protein bS18 family. As to quaternary structure, part of the 30S ribosomal subunit. Forms a tight heterodimer with protein bS6.

In terms of biological role, binds as a heterodimer with protein bS6 to the central domain of the 16S rRNA, where it helps stabilize the platform of the 30S subunit. The sequence is that of Small ribosomal subunit protein bS18 from Legionella pneumophila (strain Paris).